The sequence spans 366 residues: Molybdenum import ATP-binding protein ModC (366 aa).

The ABC transporter domain maps to 1–231 (MSEVILQLQK…KAMRPWQSFS (231 aa)). 33-40 (GRSGAGKT) provides a ligand contact to ATP. The region spanning 292–361 (ASSIRNILPA…IKGVSVAQRD (70 aa)) is the Mop domain.

The protein belongs to the ABC transporter superfamily. Molybdate importer (TC 3.A.1.8) family. The complex is composed of two ATP-binding proteins (ModC), two transmembrane proteins (ModB) and a solute-binding protein (ModA).

It is found in the cell inner membrane. It carries out the reaction molybdate(out) + ATP + H2O = molybdate(in) + ADP + phosphate + H(+). In terms of biological role, part of the ABC transporter complex ModABC involved in molybdenum import. Responsible for energy coupling to the transport system. In Vibrio cholerae serotype O1 (strain ATCC 39315 / El Tor Inaba N16961), this protein is Molybdenum import ATP-binding protein ModC.